The sequence spans 629 residues: 1-deoxy-D-xylulose-5-phosphate synthase (629 aa).

Thiamine diphosphate contacts are provided by residues His-72 and 113–115 (GHS). Asp-144 lines the Mg(2+) pocket. Residues 145–146 (GA), Asn-173, Tyr-284, and Glu-366 each bind thiamine diphosphate. Asn-173 is a Mg(2+) binding site.

This sequence belongs to the transketolase family. DXPS subfamily. As to quaternary structure, homodimer. Mg(2+) is required as a cofactor. The cofactor is thiamine diphosphate.

It carries out the reaction D-glyceraldehyde 3-phosphate + pyruvate + H(+) = 1-deoxy-D-xylulose 5-phosphate + CO2. The protein operates within metabolic intermediate biosynthesis; 1-deoxy-D-xylulose 5-phosphate biosynthesis; 1-deoxy-D-xylulose 5-phosphate from D-glyceraldehyde 3-phosphate and pyruvate: step 1/1. Its function is as follows. Catalyzes the acyloin condensation reaction between C atoms 2 and 3 of pyruvate and glyceraldehyde 3-phosphate to yield 1-deoxy-D-xylulose-5-phosphate (DXP). The sequence is that of 1-deoxy-D-xylulose-5-phosphate synthase from Halalkalibacterium halodurans (strain ATCC BAA-125 / DSM 18197 / FERM 7344 / JCM 9153 / C-125) (Bacillus halodurans).